An 80-amino-acid polypeptide reads, in one-letter code: Small ribosomal subunit protein bS18 (80 aa).

The protein belongs to the bacterial ribosomal protein bS18 family. As to quaternary structure, part of the 30S ribosomal subunit. Forms a tight heterodimer with protein bS6.

In terms of biological role, binds as a heterodimer with protein bS6 to the central domain of the 16S rRNA, where it helps stabilize the platform of the 30S subunit. This is Small ribosomal subunit protein bS18 from Clostridium botulinum (strain 657 / Type Ba4).